The primary structure comprises 130 residues: uncharacterized protein (130 aa).

An N-terminal signal peptide occupies residues 1-23 (MINRKVVYALSALLLFVYSYAFI).

This is an uncharacterized protein from Aquifex aeolicus (strain VF5).